A 1448-amino-acid chain; its full sequence is Glutamate receptor ionotropic, NMDA 2B (1448 aa).

A signal peptide spans 1–24 (MRPTEACCYLKISLIILFYMGCYA). The Extracellular segment spans residues 25 to 554 (QKHPNMDIAV…SAFLEPFSAD (530 aa)). Cysteine 81 and cysteine 316 form a disulfide bridge. Histidine 122 and glutamate 279 together coordinate Zn(2+). N-linked (GlcNAc...) asparagine glycosylation occurs at asparagine 336. 2 disulfides stabilise this stretch: cysteine 426/cysteine 453 and cysteine 433/cysteine 454. L-glutamate contacts are provided by threonine 511 and arginine 516. A helical transmembrane segment spans residues 555 to 573 (VWVMMFVMLLIVSAVAVFV). Residues 574-600 (FEYFSPVGYNRCLADGREPGGPSFTIG) lie on the Cytoplasmic side of the membrane. Residues 601–620 (KAIWLLWGLVFNNSVPVQNP) constitute an intramembrane region (discontinuously helical). The pore-forming stretch occupies residues 601 to 620 (KAIWLLWGLVFNNSVPVQNP). Residues 621–627 (KGTTSKI) lie on the Cytoplasmic side of the membrane. A helical membrane pass occupies residues 628 to 643 (MVSVWAFFAVIFLASY). The Extracellular portion of the chain corresponds to 644-819 (TANLAAFMIQ…LDIDNMAGVF (176 aa)). An N-linked (GlcNAc...) asparagine glycan is attached at asparagine 685. L-glutamate is bound by residues 687–688 (ST) and aspartate 729. The cysteines at positions 743 and 798 are disulfide-linked. A helical transmembrane segment spans residues 820–839 (YMLAAAMALSLITFIMEHLF). At 840–1448 (FWQLRHCFMG…EKLSSIESDV (609 aa)) the chain is on the cytoplasmic side. Residues 1254–1265 (APNSKYPQSPNG) show a composition bias toward polar residues. A disordered region spans residues 1254-1277 (APNSKYPQSPNGKAQKRNRSKLHR). Positions 1267–1277 (AQKRNRSKLHR) are enriched in basic residues.

It belongs to the glutamate-gated ion channel (TC 1.A.10.1) family. NR2B/GRIN2B subfamily. Heterotetramer. Forms heterotetrameric channels composed of two GluN1/zeta subunits (GRIN1), and two identical GluN2/epsilon subunits (GRIN2A, GRIN2B, GRIN2C or GRIN2D) or GluN3 subunits (GRIN3A or GRIN3B) (in vitro). In vivo, the subunit composition may depend on the expression levels of the different subunits. In terms of tissue distribution, detected in oocytes.

It is found in the cell membrane. Its subcellular location is the postsynaptic cell membrane. It carries out the reaction Ca(2+)(in) = Ca(2+)(out). It catalyses the reaction Na(+)(in) = Na(+)(out). The catalysed reaction is K(+)(in) = K(+)(out). Component of N-methyl-D-aspartate (NMDA) receptors (NMDARs) that function as heterotetrameric, ligand-gated cation channels with high calcium permeability and voltage-dependent block by Mg(2+). Channel activation requires binding of the neurotransmitter L-glutamate to the GluN2 subunit, glycine binding to the GluN1 subunit, plus membrane depolarization to eliminate channel inhibition by Mg(2+). NMDARs mediate simultaneously the potasium efflux and the influx of calcium and sodium. Each GluN2 subunit confers differential attributes to channel properties, including activation, deactivation and desensitization kinetics, pH sensitivity, Ca2(+) permeability, and binding to allosteric modulators. The protein is Glutamate receptor ionotropic, NMDA 2B of Xenopus laevis (African clawed frog).